Here is a 523-residue protein sequence, read N- to C-terminus: uncharacterized protein (523 aa).

A chloroplast-targeting transit peptide spans 1-63; sequence MACVSTCLIL…NRHGIAVVKA (63 aa). Transmembrane regions (helical) follow at residues 180 to 200, 386 to 406, and 423 to 443; these read VSFG…IIAL, ALVI…NTLL, and IYPL…IRWF.

It localises to the plastid. It is found in the chloroplast membrane. This is an uncharacterized protein from Arabidopsis thaliana (Mouse-ear cress).